We begin with the raw amino-acid sequence, 134 residues long: Large ribosomal subunit protein uL24 (134 aa).

The protein belongs to the universal ribosomal protein uL24 family. In terms of assembly, part of the 50S ribosomal subunit.

Functionally, one of two assembly initiator proteins, it binds directly to the 5'-end of the 23S rRNA, where it nucleates assembly of the 50S subunit. In terms of biological role, located at the polypeptide exit tunnel on the outside of the subunit. In Sulfolobus acidocaldarius (strain ATCC 33909 / DSM 639 / JCM 8929 / NBRC 15157 / NCIMB 11770), this protein is Large ribosomal subunit protein uL24.